Consider the following 219-residue polypeptide: Flagellar biosynthetic protein FliZ (219 aa).

Residues M1–A26 form the signal peptide. Residues K41 to D61 are compositionally biased toward basic and acidic residues. The interval K41 to E62 is disordered. The chain crosses the membrane as a helical span at residues V71–L96. Residues L200–K212 show a composition bias toward basic and acidic residues. Residues L200–E219 are disordered.

It localises to the cell membrane. Functionally, may be a structural component of the flagellum that anchors the rod to the membrane. The polypeptide is Flagellar biosynthetic protein FliZ (fliZ) (Bacillus subtilis (strain 168)).